A 363-amino-acid chain; its full sequence is MPNSFGKLFTVTTWGESHGASVGVVVDGCPPNLPLSVEEIQTELDRRRPGQSDIVTPRKEEDRVEILSGLFEGKTTGTPLTMMVRNADQRPEAYAEMREKFRPSHADYTYQAKFGIRDHRGGGRSSARETIGRVAAGAIAQKILRLAGGIEIRAFVTQIQDICVPALTAFPSREEVEATPIRCPHAATAAAMIERIKAVRSQGDSVGGVIECRVRGVPAGLGEPVFDRLEADLGKAMLSLPATKGFEIGSGFAGTRLKGSEHNDPFVMRDGRVTTTTNHSGGVQGGISNGAEIVFRVAFKPTATILQPQQTVDVHGADTELAARGRHDPCVLPRAVPIVEAMTALVLVDHWMRQSAQCGTFKF.

R47 is an NADP(+) binding site. Residues 124–126, G285, 300–304, and R326 each bind FMN; these read RSS and KPTAT.

This sequence belongs to the chorismate synthase family. As to quaternary structure, homotetramer. Requires FMNH2 as cofactor.

It catalyses the reaction 5-O-(1-carboxyvinyl)-3-phosphoshikimate = chorismate + phosphate. It participates in metabolic intermediate biosynthesis; chorismate biosynthesis; chorismate from D-erythrose 4-phosphate and phosphoenolpyruvate: step 7/7. Its function is as follows. Catalyzes the anti-1,4-elimination of the C-3 phosphate and the C-6 proR hydrogen from 5-enolpyruvylshikimate-3-phosphate (EPSP) to yield chorismate, which is the branch point compound that serves as the starting substrate for the three terminal pathways of aromatic amino acid biosynthesis. This reaction introduces a second double bond into the aromatic ring system. This is Chorismate synthase from Opitutus terrae (strain DSM 11246 / JCM 15787 / PB90-1).